The sequence spans 452 residues: tRNA-2-methylthio-N(6)-dimethylallyladenosine synthase (452 aa).

The MTTase N-terminal domain occupies 16–134; sequence KRFFISTWGC…LPEYIERVKT (119 aa). 6 residues coordinate [4Fe-4S] cluster: Cys25, Cys61, Cys95, Cys171, Cys175, and Cys178. A Radical SAM core domain is found at 157–387; it reads RKSDIKAFVT…VEAVNEIMAR (231 aa). The region spanning 390 to 452 is the TRAM domain; that stretch reads KEFEGKTVEV…NSFSLTGEII (63 aa).

The protein belongs to the methylthiotransferase family. MiaB subfamily. In terms of assembly, monomer. It depends on [4Fe-4S] cluster as a cofactor.

It localises to the cytoplasm. The enzyme catalyses N(6)-dimethylallyladenosine(37) in tRNA + (sulfur carrier)-SH + AH2 + 2 S-adenosyl-L-methionine = 2-methylsulfanyl-N(6)-dimethylallyladenosine(37) in tRNA + (sulfur carrier)-H + 5'-deoxyadenosine + L-methionine + A + S-adenosyl-L-homocysteine + 2 H(+). Functionally, catalyzes the methylthiolation of N6-(dimethylallyl)adenosine (i(6)A), leading to the formation of 2-methylthio-N6-(dimethylallyl)adenosine (ms(2)i(6)A) at position 37 in tRNAs that read codons beginning with uridine. The chain is tRNA-2-methylthio-N(6)-dimethylallyladenosine synthase from Clostridium novyi (strain NT).